A 360-amino-acid polypeptide reads, in one-letter code: Phenylalanine--tRNA ligase alpha subunit (360 aa).

Glu-260 is a Mg(2+) binding site.

Belongs to the class-II aminoacyl-tRNA synthetase family. Phe-tRNA synthetase alpha subunit type 1 subfamily. As to quaternary structure, tetramer of two alpha and two beta subunits. It depends on Mg(2+) as a cofactor.

The protein resides in the cytoplasm. It carries out the reaction tRNA(Phe) + L-phenylalanine + ATP = L-phenylalanyl-tRNA(Phe) + AMP + diphosphate + H(+). The sequence is that of Phenylalanine--tRNA ligase alpha subunit from Methylobacterium sp. (strain 4-46).